The primary structure comprises 209 residues: Imidazoleglycerol-phosphate dehydratase (209 aa).

This sequence belongs to the imidazoleglycerol-phosphate dehydratase family.

The protein resides in the cytoplasm. It carries out the reaction D-erythro-1-(imidazol-4-yl)glycerol 3-phosphate = 3-(imidazol-4-yl)-2-oxopropyl phosphate + H2O. Its pathway is amino-acid biosynthesis; L-histidine biosynthesis; L-histidine from 5-phospho-alpha-D-ribose 1-diphosphate: step 6/9. The chain is Imidazoleglycerol-phosphate dehydratase from Nostoc sp. (strain PCC 7120 / SAG 25.82 / UTEX 2576).